Here is a 99-residue protein sequence, read N- to C-terminus: Aspartyl/glutamyl-tRNA(Asn/Gln) amidotransferase subunit C (99 aa).

The protein belongs to the GatC family. As to quaternary structure, heterotrimer of A, B and C subunits.

The enzyme catalyses L-glutamyl-tRNA(Gln) + L-glutamine + ATP + H2O = L-glutaminyl-tRNA(Gln) + L-glutamate + ADP + phosphate + H(+). The catalysed reaction is L-aspartyl-tRNA(Asn) + L-glutamine + ATP + H2O = L-asparaginyl-tRNA(Asn) + L-glutamate + ADP + phosphate + 2 H(+). Allows the formation of correctly charged Asn-tRNA(Asn) or Gln-tRNA(Gln) through the transamidation of misacylated Asp-tRNA(Asn) or Glu-tRNA(Gln) in organisms which lack either or both of asparaginyl-tRNA or glutaminyl-tRNA synthetases. The reaction takes place in the presence of glutamine and ATP through an activated phospho-Asp-tRNA(Asn) or phospho-Glu-tRNA(Gln). This Paraburkholderia phytofirmans (strain DSM 17436 / LMG 22146 / PsJN) (Burkholderia phytofirmans) protein is Aspartyl/glutamyl-tRNA(Asn/Gln) amidotransferase subunit C.